Consider the following 101-residue polypeptide: NAD(P)H-quinone oxidoreductase subunit 4L, chloroplastic (101 aa).

Transmembrane regions (helical) follow at residues 2-22 (ILEH…YGLI), 32-52 (MCLE…SDFF), and 61-81 (IFCI…LAIV).

This sequence belongs to the complex I subunit 4L family. In terms of assembly, NDH is composed of at least 16 different subunits, 5 of which are encoded in the nucleus.

Its subcellular location is the plastid. The protein localises to the chloroplast thylakoid membrane. It carries out the reaction a plastoquinone + NADH + (n+1) H(+)(in) = a plastoquinol + NAD(+) + n H(+)(out). It catalyses the reaction a plastoquinone + NADPH + (n+1) H(+)(in) = a plastoquinol + NADP(+) + n H(+)(out). Functionally, NDH shuttles electrons from NAD(P)H:plastoquinone, via FMN and iron-sulfur (Fe-S) centers, to quinones in the photosynthetic chain and possibly in a chloroplast respiratory chain. The immediate electron acceptor for the enzyme in this species is believed to be plastoquinone. Couples the redox reaction to proton translocation, and thus conserves the redox energy in a proton gradient. In Crucihimalaya wallichii (Rock-cress), this protein is NAD(P)H-quinone oxidoreductase subunit 4L, chloroplastic.